The primary structure comprises 448 residues: N-succinylarginine dihydrolase (448 aa).

Substrate is bound by residues 19–28 (GGLSYGNVAS), Asn110, and 137–138 (HR). Residue Glu174 is part of the active site. Arg214 contacts substrate. His250 is a catalytic residue. Substrate contacts are provided by Asp252 and Asn365. Cys371 functions as the Nucleophile in the catalytic mechanism.

This sequence belongs to the succinylarginine dihydrolase family. In terms of assembly, homodimer.

It catalyses the reaction N(2)-succinyl-L-arginine + 2 H2O + 2 H(+) = N(2)-succinyl-L-ornithine + 2 NH4(+) + CO2. The protein operates within amino-acid degradation; L-arginine degradation via AST pathway; L-glutamate and succinate from L-arginine: step 2/5. Functionally, catalyzes the hydrolysis of N(2)-succinylarginine into N(2)-succinylornithine, ammonia and CO(2). The chain is N-succinylarginine dihydrolase from Pseudomonas fluorescens (strain SBW25).